Here is a 119-residue protein sequence, read N- to C-terminus: Large ribosomal subunit protein uL18 (119 aa).

Belongs to the universal ribosomal protein uL18 family. Part of the 50S ribosomal subunit; part of the 5S rRNA/L5/L18/L25 subcomplex. Contacts the 5S and 23S rRNAs.

Its function is as follows. This is one of the proteins that bind and probably mediate the attachment of the 5S RNA into the large ribosomal subunit, where it forms part of the central protuberance. In Clostridium tetani (strain Massachusetts / E88), this protein is Large ribosomal subunit protein uL18.